The sequence spans 195 residues: Nicotinamide riboside kinase 1 (195 aa).

10–18 contributes to the ATP binding site; sequence GVTNGGKTT. Residues T17 and D36 each coordinate Mg(2+). The active-site Proton acceptor is D36. Substrate-binding positions include 36 to 39 and 55 to 56; these read DDFF and YD. Residue R128 coordinates ATP. Substrate is bound by residues R129 and 134–135; that span reads YE. ATP contacts are provided by residues 132–134 and 172–174; these read RVY and RSE.

It belongs to the uridine kinase family. NRK subfamily. In terms of assembly, monomer.

It carries out the reaction beta-nicotinamide D-riboside + ATP = beta-nicotinamide D-ribonucleotide + ADP + H(+). The catalysed reaction is beta-D-ribosylnicotinate + ATP = nicotinate beta-D-ribonucleotide + ADP + H(+). The protein operates within cofactor biosynthesis; NAD(+) biosynthesis. Catalyzes the phosphorylation of nicotinamide riboside (NR) and nicotinic acid riboside (NaR) to form nicotinamide mononucleotide (NMN) and nicotinic acid mononucleotide (NaMN). The polypeptide is Nicotinamide riboside kinase 1 (Nmrk1) (Mus musculus (Mouse)).